A 759-amino-acid polypeptide reads, in one-letter code: Mitogen-activated protein kinase kinase kinase 1a (759 aa).

3 stretches are compositionally biased toward basic and acidic residues: residues 1 to 17 (MIEERGSSRGSREDRGS), 25 to 36 (SFEDKGSSHDWK), and 52 to 64 (AKKDRNYDAKVDS). 4 disordered regions span residues 1–90 (MIEE…NLSK), 122–160 (LGIEASDWESRRKSAVYSRPTSPPRVSHDTGQSSYSHDF), 165–184 (SRVDSSLESPPLSPRGLAPM), and 195–239 (RKHR…PDPL). Residues 72-85 (VHSTSSPRLSPASS) are compositionally biased toward low complexity. Residues 426-679 (WAKGEFLGSG…CDMLLAHPFI (254 aa)) enclose the Protein kinase domain. ATP contacts are provided by residues 432 to 440 (LGSGTFGSV) and Lys-454. The active-site Proton acceptor is Asp-549.

The protein belongs to the protein kinase superfamily. STE Ser/Thr protein kinase family. MAP kinase kinase kinase subfamily.

Its subcellular location is the cell membrane. It carries out the reaction L-seryl-[protein] + ATP = O-phospho-L-seryl-[protein] + ADP + H(+). The enzyme catalyses L-threonyl-[protein] + ATP = O-phospho-L-threonyl-[protein] + ADP + H(+). Functionally, the CERK1, MEKK1a/b, MKK1a/b/c and MPK4a/b proteins are involved in pathogen defense. The pathway induces rapid growth inhibition, cell wall depositions and accumulation of defense-related transcripts. This protein is required for responses to chitin and acts redundantly with MEKK1b. This chain is Mitogen-activated protein kinase kinase kinase 1a, found in Physcomitrium patens (Spreading-leaved earth moss).